Here is a 229-residue protein sequence, read N- to C-terminus: Sugar fermentation stimulation protein homolog (229 aa).

This sequence belongs to the SfsA family.

The chain is Sugar fermentation stimulation protein homolog from Caldanaerobacter subterraneus subsp. tengcongensis (strain DSM 15242 / JCM 11007 / NBRC 100824 / MB4) (Thermoanaerobacter tengcongensis).